A 314-amino-acid chain; its full sequence is MPEVQTDHPETAELSKPQLRMVDLNLLTVFDAVMQEQNITRAAHVLGMSQPAVSNAVARLKVMFNDELFVRYGRGIQPTARAFQLFGSVRQALQLVQNELPGSGFEPASSERVFHLCVCSPLDSILTSQIYNHIEQIAPNIHVMFKSSLNQNTEHQLRYQETEFVISYEDFHRPEFTSVPLFKDEMVLVASKNHPTIKGPLLKHDVYNEQHAAVSLDRFASFSQPWYDTVDKQASIAYQGMAMMSVLSVVSQTHLVAIAPRWLAEEFAESLELQVLPLPLKQNSRTCYLSWHEAAGRDKGHQWMEEQLVSICKR.

Residues 22–79 (VDLNLLTVFDAVMQEQNITRAAHVLGMSQPAVSNAVARLKVMFNDELFVRYGRGIQPT) form the HTH lysR-type domain. Residues 39–58 (ITRAAHVLGMSQPAVSNAVA) constitute a DNA-binding region (H-T-H motif).

The protein belongs to the LysR transcriptional regulatory family.

In terms of biological role, a global transcription factor. Activates transcription of the 9 following operons; yjjQ-bglJ, yjjP, acrEF, ybdO, yjcRQP, casABCDE12, rhsD-ybbC, fepE and gltF, in most cases it probably interferes with silencing by H-NS and activates transcription. Represses transcription of the 3 following operons; uxaCA, sdaCB and btsT. H-NS repression of the bgl operon, leading to the ability to metabolize some beta-glucosides. It also directly activates the bgl operon. Activation is H-NS and BglJ-RcsB independent. The chain is HTH-type transcriptional regulator LeuO (leuO) from Escherichia coli (strain K12).